The sequence spans 479 residues: Solute carrier family 7 member 13 (479 aa).

The Cytoplasmic portion of the chain corresponds to M1–Q14. A helical transmembrane segment spans residues L15–V35. The Extracellular portion of the chain corresponds to S36 to N47. Residues V48–C68 traverse the membrane as a helical segment. Over A69–C89 the chain is Cytoplasmic. Residues F90 to L110 form a helical membrane-spanning segment. The Extracellular portion of the chain corresponds to A111–C129. Residues S130–L150 form a helical membrane-spanning segment. Topologically, residues N151–S165 are cytoplasmic. The chain crosses the membrane as a helical span at residues M166–T186. Over G187 to R208 the chain is Extracellular. The chain crosses the membrane as a helical span at residues L209–V229. Residues A230 to R242 are Cytoplasmic-facing. The helical transmembrane segment at C243–L263 threads the bilayer. The Extracellular portion of the chain corresponds to T264–L289. Residues T290–F310 form a helical membrane-spanning segment. The Cytoplasmic segment spans residues E311–P338. A helical membrane pass occupies residues F339–I359. E360 is a topological domain (extracellular). A helical transmembrane segment spans residues L361–L381. Topologically, residues K382–V396 are cytoplasmic. Residues F397–I417 form a helical membrane-spanning segment. Residues K418–Q423 lie on the Extracellular side of the membrane. Residues Y424–F444 traverse the membrane as a helical segment. Over K445 to S479 the chain is Cytoplasmic.

It belongs to the amino acid-polyamine-organocation (APC) superfamily. In terms of assembly, disulfide-linked heterodimer composed of the catalytic light subunit SLC7A13 and the heavy subunit SLC3A1.

It localises to the apical cell membrane. It carries out the reaction L-cystine(out) + L-aspartate(in) = L-cystine(in) + L-aspartate(out). The enzyme catalyses L-cystine(out) = L-cystine(in). It catalyses the reaction L-aspartate(in) + L-glutamate(out) = L-aspartate(out) + L-glutamate(in). The catalysed reaction is L-aspartate(in) + L-glutamine(out) = L-aspartate(out) + L-glutamine(in). It carries out the reaction L-aspartate(in) + L-methionine(out) = L-aspartate(out) + L-methionine(in). The enzyme catalyses L-leucine(out) + L-aspartate(in) = L-leucine(in) + L-aspartate(out). It catalyses the reaction L-valine(out) + L-aspartate(in) = L-valine(in) + L-aspartate(out). The catalysed reaction is L-aspartate(in) + L-phenylalanine(out) = L-aspartate(out) + L-phenylalanine(in). It carries out the reaction L-tyrosine(out) + L-aspartate(in) = L-tyrosine(in) + L-aspartate(out). The enzyme catalyses L-tryptophan(out) + L-aspartate(in) = L-tryptophan(in) + L-aspartate(out). Functionally, associates with SLC3A1/rBAT to form a functional heterodimeric complex that transports anionic and neutral amino acids across the apical plasma membrane of renal epithelium. Preferentially mediates exchange transport, but can also operate via facilitated diffusion. May act as a major transporter for L-cystine in late proximal tubules, ensuring its reabsorption from the luminal fluid in exchange for cytosolic L-glutamate or L-aspartate. The chain is Solute carrier family 7 member 13 (Slc7a13) from Rattus norvegicus (Rat).